We begin with the raw amino-acid sequence, 86 residues long: Small ribosomal subunit protein uS17 (86 aa).

This sequence belongs to the universal ribosomal protein uS17 family. Part of the 30S ribosomal subunit.

Its function is as follows. One of the primary rRNA binding proteins, it binds specifically to the 5'-end of 16S ribosomal RNA. In Methylococcus capsulatus (strain ATCC 33009 / NCIMB 11132 / Bath), this protein is Small ribosomal subunit protein uS17.